Here is a 377-residue protein sequence, read N- to C-terminus: Flap endonuclease 1 (377 aa).

The tract at residues Met1 to Arg105 is N-domain. Asp34 contributes to the Mg(2+) binding site. DNA-binding residues include Arg47 and Arg71. A Mg(2+)-binding site is contributed by Asp87. Residues Ser99 to Ala119 are disordered. The tract at residues Glu120–Tyr251 is I-domain. Residues Glu156, Glu158, Asp177, and Asp179 each contribute to the Mg(2+) site. Glu156 is a binding site for DNA. DNA-binding residues include Gly229 and Asp231. Asp231 is a binding site for Mg(2+). The interaction with PCNA stretch occupies residues Val338–Phe346.

It belongs to the XPG/RAD2 endonuclease family. FEN1 subfamily. Interacts with PCNA. Three molecules of FEN1 bind to one PCNA trimer with each molecule binding to one PCNA monomer. PCNA stimulates the nuclease activity without altering cleavage specificity. Mg(2+) is required as a cofactor. In terms of processing, phosphorylated. Phosphorylation upon DNA damage induces relocalization to the nuclear plasma.

Its subcellular location is the nucleus. It localises to the nucleolus. The protein resides in the nucleoplasm. It is found in the mitochondrion. Structure-specific nuclease with 5'-flap endonuclease and 5'-3' exonuclease activities involved in DNA replication and repair. During DNA replication, cleaves the 5'-overhanging flap structure that is generated by displacement synthesis when DNA polymerase encounters the 5'-end of a downstream Okazaki fragment. It enters the flap from the 5'-end and then tracks to cleave the flap base, leaving a nick for ligation. Also involved in the long patch base excision repair (LP-BER) pathway, by cleaving within the apurinic/apyrimidinic (AP) site-terminated flap. Acts as a genome stabilization factor that prevents flaps from equilibrating into structures that lead to duplications and deletions. Also possesses 5'-3' exonuclease activity on nicked or gapped double-stranded DNA, and exhibits RNase H activity. Also involved in replication and repair of rDNA and in repairing mitochondrial DNA. This chain is Flap endonuclease 1, found in Vanderwaltozyma polyspora (strain ATCC 22028 / DSM 70294 / BCRC 21397 / CBS 2163 / NBRC 10782 / NRRL Y-8283 / UCD 57-17) (Kluyveromyces polysporus).